The chain runs to 496 residues: UDP-glycosyltransferase 73C3 (496 aa).

Residues Ser297, 357 to 359, 374 to 382, and 396 to 399 each bind UDP-alpha-D-glucose; these read APQ, HCGWNSTLE, and FGDQ.

The protein belongs to the UDP-glycosyltransferase family.

The sequence is that of UDP-glycosyltransferase 73C3 (UGT73C3) from Arabidopsis thaliana (Mouse-ear cress).